Consider the following 263-residue polypeptide: 3-methyl-2-oxobutanoate hydroxymethyltransferase 2 (263 aa).

Positions 45 and 84 each coordinate Mg(2+). Residues 45–46 (DS), D84, and K112 each bind 3-methyl-2-oxobutanoate. E114 is a binding site for Mg(2+). The active-site Proton acceptor is the E181.

Belongs to the PanB family. As to quaternary structure, homodecamer; pentamer of dimers. Mg(2+) serves as cofactor.

It is found in the cytoplasm. It catalyses the reaction 3-methyl-2-oxobutanoate + (6R)-5,10-methylene-5,6,7,8-tetrahydrofolate + H2O = 2-dehydropantoate + (6S)-5,6,7,8-tetrahydrofolate. It participates in cofactor biosynthesis; (R)-pantothenate biosynthesis; (R)-pantoate from 3-methyl-2-oxobutanoate: step 1/2. Its function is as follows. Catalyzes the reversible reaction in which hydroxymethyl group from 5,10-methylenetetrahydrofolate is transferred onto alpha-ketoisovalerate to form ketopantoate. This is 3-methyl-2-oxobutanoate hydroxymethyltransferase 2 from Aliivibrio fischeri (strain ATCC 700601 / ES114) (Vibrio fischeri).